We begin with the raw amino-acid sequence, 509 residues long: Photosystem II CP47 reaction center protein (509 aa).

6 helical membrane-spanning segments follow: residues 21–36 (SVHL…WAGS), 101–115 (IVLS…IWHW), 140–156 (GIHL…FGAF), 203–218 (IAAG…FHLN), 237–252 (VLSS…SFVV), and 457–472 (NFAL…HGSR).

Belongs to the PsbB/PsbC family. PsbB subfamily. PSII is composed of 1 copy each of membrane proteins PsbA, PsbB, PsbC, PsbD, PsbE, PsbF, PsbH, PsbI, PsbJ, PsbK, PsbL, PsbM, PsbT, PsbY, PsbZ, Psb30/Ycf12, at least 3 peripheral proteins of the oxygen-evolving complex and a large number of cofactors. It forms dimeric complexes. Requires Binds multiple chlorophylls. PSII binds additional chlorophylls, carotenoids and specific lipids. as cofactor.

It is found in the plastid. It localises to the chloroplast thylakoid membrane. Functionally, one of the components of the core complex of photosystem II (PSII). It binds chlorophyll and helps catalyze the primary light-induced photochemical processes of PSII. PSII is a light-driven water:plastoquinone oxidoreductase, using light energy to abstract electrons from H(2)O, generating O(2) and a proton gradient subsequently used for ATP formation. The sequence is that of Photosystem II CP47 reaction center protein from Cyanidium caldarium (Red alga).